The sequence spans 161 residues: Putative 4-hydroxy-4-methyl-2-oxoglutarate aldolase (161 aa).

Residues 78-81 and Arg-100 contribute to the substrate site; that span reads GDVI. Residue Asp-101 coordinates a divalent metal cation.

This sequence belongs to the class II aldolase/RraA-like family. Homotrimer. A divalent metal cation serves as cofactor.

It carries out the reaction 4-hydroxy-4-methyl-2-oxoglutarate = 2 pyruvate. The catalysed reaction is oxaloacetate + H(+) = pyruvate + CO2. Functionally, catalyzes the aldol cleavage of 4-hydroxy-4-methyl-2-oxoglutarate (HMG) into 2 molecules of pyruvate. Also contains a secondary oxaloacetate (OAA) decarboxylase activity due to the common pyruvate enolate transition state formed following C-C bond cleavage in the retro-aldol and decarboxylation reactions. This is Putative 4-hydroxy-4-methyl-2-oxoglutarate aldolase from Mycobacterium avium (strain 104).